The sequence spans 227 residues: Translation initiation factor 6 (227 aa).

Belongs to the eIF-6 family.

In terms of biological role, binds to the 50S ribosomal subunit and prevents its association with the 30S ribosomal subunit to form the 70S initiation complex. This is Translation initiation factor 6 from Pyrococcus horikoshii (strain ATCC 700860 / DSM 12428 / JCM 9974 / NBRC 100139 / OT-3).